Consider the following 1682-residue polypeptide: PHD and RING finger domain-containing protein 1 (1682 aa).

The tract at residues 1 to 81 is disordered; sequence MDDDNLDELV…SGSEDSEDGV (81 aa). The segment covering 41–81 has biased composition (acidic residues); it reads DSEDDTGSEQDDDTDGEETEGLSEEEDPEDRSGSEDSEDGV. The RING-type; degenerate zinc-finger motif lies at 109 to 150; sequence CPICLNAFRDQAVGTPETCAHYFCLDCIIEWSRNANSCPVDR. The PHD-type zinc finger occupies 185–235; sequence PTFCEVCGRSDREDRLLLCDGCDAGYHMECLDPPLQEVPVDEWFCPECTVP. Disordered regions lie at residues 330 to 412, 444 to 483, 532 to 582, 605 to 774, and 825 to 856; these read PLTP…SMPS, PFDSNEEQSADPPSPLSAKRRVLSRSALQSHQPVARPVAM, SLSA…RQPN, VRSD…GSSF, and LKSEIYDPFDPTGSDSSPPSSSPESLGPGLLP. Thr-332 carries the phosphothreonine modification. 2 stretches are compositionally biased toward basic residues: residues 336 to 361 and 369 to 384; these read PAKRKRKAGRRKKVLGRKKTRSRSSV and RAKKRQHRVRKTKGRK. Phosphoserine occurs at positions 447 and 457. Polar residues-rich tracts occupy residues 609-620, 630-667, and 734-748; these read PSLTPRSGLSRT, THSSSPQLNGSNVRVSSASTKIVTHSSFPSKNTASGLP, and SSRGPQETGSHTSGS. The span at 832–856 shows a compositional bias: low complexity; it reads PFDPTGSDSSPPSSSPESLGPGLLP. Residues Ser-845, Ser-846, Ser-864, Ser-867, Ser-919, Ser-982, and Ser-1000 each carry the phosphoserine modification. Disordered regions lie at residues 911-1225 and 1288-1322; these read SKGS…VSEV and DDMSSPPSPESTDSSPERDFPPNPILPPASLPQDS. Over residues 919–931 the composition is skewed to acidic residues; sequence SDLEQEGLGEIEP. Low complexity predominate over residues 999 to 1008; it reads SSRSRSTSSS. Composition is skewed to basic residues over residues 1009-1030 and 1053-1063; these read RSRKKTKKKKKKVAREHQRTRS and RRHRAKTKSRR. Basic and acidic residues predominate over residues 1064-1090; sequence SSSDRASSQDRAKRRKDRDDRDREHRR. 2 stretches are compositionally biased toward basic residues: residues 1091–1104 and 1119–1129; these read GSWGHGRCRRKSRS and SKRRKRRHSGS. A Phosphoserine modification is found at Ser-1135. Basic and acidic residues-rich tracts occupy residues 1147-1161 and 1182-1197; these read RSRERMDKQESVTRS and PSREKRAHSPEKKGPV. Residue Ser-1201 is modified to Phosphoserine. Residues 1288 to 1301 are compositionally biased toward low complexity; sequence DDMSSPPSPESTDS. Pro residues predominate over residues 1308-1317; the sequence is PPNPILPPAS. Ser-1368 and Ser-1379 each carry phosphoserine. Thr-1412 carries the post-translational modification Phosphothreonine. Disordered regions lie at residues 1419–1445, 1463–1496, 1567–1588, and 1663–1682; these read EHSTPAALDRDPRTPLQRPQRPQEGDW, LPPPIHVLQESGLPDADPSQPPGAPRAEGLPAAG, AVPTTNNSEERTATPKTAAEKT, and MRRHKKTEGGEEPPTQGAET. Residues 1574 to 1588 are compositionally biased toward basic and acidic residues; sequence SEERTATPKTAAEKT. Positions 1585-1612 form a coiled coil; that stretch reads AEKTKKEEYMKKLHMQERAVEEVKLAIK.

Interacts with POLR2A (via the C-terminal domain).

The sequence is that of PHD and RING finger domain-containing protein 1 from Mus musculus (Mouse).